The chain runs to 356 residues: MNFTEPSPLAQSTVVGFLPELESLTPVPSNETSCENWREVHHLVFHAANVCFAVGLLIPTTLHLHMILLRVMLSIGCTLYVVWATLYRCALDMMIWNSVFLGINILHLSYLLYKKRPVKIEKDLGGVYHRLFEPLRVPPDLFRRLTGQFCVIQTLKRGQVYATEDKTSVDDRLSILLKGRMKVSYRGHFLHNIYPCAFIDSPEFRSTQMHKGEKFQVTIVADDNCRFLCWSRERLTYFLESEPFLYEIFRYLIGKDITNKLYSLNDPTLNDKKVKKLEPQMSLSTQISMLEMRNSITSSSDIEDGLHHFLRGSSSTASLPMSSPQQRASPKMKPIEEGLEDDDEVFVPVSPAHQLP.

The Extracellular portion of the chain corresponds to 1 to 48 (MNFTEPSPLAQSTVVGFLPELESLTPVPSNETSCENWREVHHLVFHAA). 2 N-linked (GlcNAc...) asparagine glycosylation sites follow: asparagine 2 and asparagine 30. Residues 49 to 69 (NVCFAVGLLIPTTLHLHMILL) traverse the membrane as a helical segment. Residue arginine 70 is a topological domain, cytoplasmic. Residues 71–91 (VMLSIGCTLYVVWATLYRCAL) form a helical membrane-spanning segment. A topological domain (extracellular) is located at residue aspartate 92. A helical membrane pass occupies residues 93–113 (MMIWNSVFLGINILHLSYLLY). The segment at 93-115 (MMIWNSVFLGINILHLSYLLYKK) is required for interaction with CAV3. Residues 114 to 356 (KKRPVKIEKD…VPVSPAHQLP (243 aa)) are Cytoplasmic-facing. Positions 136 to 186 (RVPPDLFRRLTGQFCVIQTLKRGQVYATEDKTSVDDRLSILLKGRMKVSYR) are required for interaction with KCNK2. A phosphoserine mark is found at serine 295 and serine 318. Low complexity predominate over residues 313–323 (SSSTASLPMSS). The segment at 313–356 (SSSTASLPMSSPQQRASPKMKPIEEGLEDDDEVFVPVSPAHQLP) is disordered.

Belongs to the popeye family. Homodimer. Homodimerization requires the C-terminus cytoplasmic region. Interacts (via the C-terminus cytoplasmic tail) with TJP1. Interacts (via the C-terminus cytoplasmic tail) with ARHGEF25/GEFT (via the DH domain). Interacts (via the C-terminus cytoplasmic tail) with VAMP3. Interacts with KCNK2; the interaction enhances KCNK2 surface expression and is inhibited by cAMP. Interacts with CAV3. Strongly expressed in heart and skeletal muscle. Weakly expressed in brain, spleen, liver, kidney and lung.

Its subcellular location is the lateral cell membrane. The protein localises to the cell junction. The protein resides in the tight junction. It localises to the membrane. It is found in the cell membrane. Its subcellular location is the sarcolemma. The protein localises to the caveola. In terms of biological role, cell adhesion molecule involved in the establishment and/or maintenance of cell integrity. Involved in the formation and regulation of the tight junction (TJ) paracellular permeability barrier in epithelial cells. Plays a role in VAMP3-mediated vesicular transport and recycling of different receptor molecules through its interaction with VAMP3. Plays a role in the regulation of cell shape and movement by modulating the Rho-family GTPase activity through its interaction with ARHGEF25/GEFT. Induces primordial adhesive contact and aggregation of epithelial cells in a Ca(2+)-independent manner. Important for skeletal muscle and heart development. Also involved in striated muscle regeneration and repair and in the regulation of cell spreading. Important for the maintenance of cardiac function. Plays a regulatory function in heart rate dynamics mediated, at least in part, through cAMP-binding and, probably, by increasing cell surface expression of the potassium channel KCNK2 and enhancing current density. Is a caveolae-associated protein important for the preservation of caveolae structural and functional integrity as well as for heart protection against ischemia injury. The chain is Popeye domain-containing protein 1 (Popdc1) from Rattus norvegicus (Rat).